Consider the following 516-residue polypeptide: Putative protein NRT1/ PTR FAMILY 2.2 (516 aa).

11 helical membrane passes run 31–51 (TLLGLSIASFGWVMNLVVFLI), 67–87 (IVNGCVSMLPVVAAILADSFF), 90–110 (IPVISVSAFISLLGIILLTMI), 138–158 (ILYIALALVIIGSAGTRFTLA), 174–194 (FFNWYFLTLYTGAITGATAIV), 201–221 (SWKLGFGLCAVANLISFIVFV), 320–340 (LLLAIIFVSTPMVTQTSLIIL), 362–382 (VIVIITACIVILMNNCLVYPM), 394–414 (LQKVGIGHVFIILSMAISAIV), 437–457 (FIASVVIGISFYLSTALITLI), and 476–496 (VYWLLVIVGVLNYFLVCAWFY).

This sequence belongs to the major facilitator superfamily. Proton-dependent oligopeptide transporter (POT/PTR) (TC 2.A.17) family. Not detected.

Its subcellular location is the membrane. Transporter involved in a passive nitrate efflux. The protein is Putative protein NRT1/ PTR FAMILY 2.2 (NPF2.2) of Arabidopsis thaliana (Mouse-ear cress).